The sequence spans 298 residues: MTDLHTDVERYLRYLSVERQLSPITLLNYQRQLEAIIHFASENGLQSWQQCDVTMVRNFAVRSRRKGLGAASLALRLSALRSFFDWLVSQNELKANPAKGVSAPKAPRHLPKNIDVDDMNRLLDIDINDPLAVRDRAMLEVMYGAGLRLSELVGLDIKHLDLESGEVWVMGKGSKERRLPIGRNAVAWIEHWLDLRDLFGSEDDALFLSKLGKRISARNVQKRFAEWGIKQGLNNHVHPHKLRHSFATHMLESSGDLRGVQELLGHANLSTTQIYTHLDFQHLASVYDAAHPRAKRGK.

The region spanning 2-88 is the Core-binding (CB) domain; the sequence is TDLHTDVERY…ALRSFFDWLV (87 aa). One can recognise a Tyr recombinase domain in the interval 109 to 288; that stretch reads HLPKNIDVDD…DFQHLASVYD (180 aa). Catalysis depends on residues Arg148, Lys172, His240, Arg243, and His266. The active-site O-(3'-phospho-DNA)-tyrosine intermediate is the Tyr275.

This sequence belongs to the 'phage' integrase family. XerC subfamily. Forms a cyclic heterotetrameric complex composed of two molecules of XerC and two molecules of XerD, in which XerC interacts with XerD via its C-terminal region, XerD interacts with XerC via its C-terminal region and so on.

It is found in the cytoplasm. FtsK may regulate the catalytic switch between XerC and XerD in the heterotetrameric complex during the two steps of the recombination process. Its function is as follows. Site-specific tyrosine recombinase, which acts by catalyzing the cutting and rejoining of the recombining DNA molecules. Binds cooperatively to specific DNA consensus sequences that are separated from XerD binding sites by a short central region, forming the heterotetrameric XerC-XerD complex that recombines DNA substrates. The complex is essential to convert dimers of the bacterial chromosome into monomers to permit their segregation at cell division. It also contributes to the segregational stability of plasmids. In the complex XerC specifically exchanges the top DNA strands. This chain is Tyrosine recombinase XerC, found in Escherichia coli O45:K1 (strain S88 / ExPEC).